Here is a 343-residue protein sequence, read N- to C-terminus: Allantoicase (343 aa).

Belongs to the allantoicase family.

It carries out the reaction allantoate + H2O = (S)-ureidoglycolate + urea. Its pathway is nitrogen metabolism; (S)-allantoin degradation; (S)-ureidoglycolate from allantoate (aminidohydrolase route): step 1/1. Its function is as follows. Utilization of purines as secondary nitrogen sources, when primary sources are limiting. The sequence is that of Allantoicase (DAL2) from Saccharomyces cerevisiae (strain ATCC 204508 / S288c) (Baker's yeast).